A 752-amino-acid chain; its full sequence is Myotubularin-related protein 10 (752 aa).

One can recognise a Myotubularin phosphatase domain in the interval 206–636 (FDCSSDWDRE…SHLSVWKLYF (431 aa)). Residues 652–683 (TAFHKLSVLTDEIEMLQNQLRQYKGAAGTANT) are a coiled coil.

This sequence belongs to the protein-tyrosine phosphatase family. Non-receptor class myotubularin subfamily.

The chain is Myotubularin-related protein 10 (mtmr10) from Danio rerio (Zebrafish).